A 220-amino-acid polypeptide reads, in one-letter code: Probable N-acetyl-alpha-D-glucosaminyl L-malate deacetylase 2 (220 aa).

Residues histidine 11, aspartate 14, and histidine 125 each contribute to the Zn(2+) site.

This sequence belongs to the PIGL family. The cofactor is Zn(2+).

The enzyme catalyses (S)-malyl N-acetyl-alpha-D-glucosaminide + H2O = (S)-malyl alpha-D-glucosaminide + acetate. Functionally, involved in bacillithiol (BSH) biosynthesis. Catalyzes the second step of the pathway, the deacetylation of N-acetylglucosaminylmalate (GlcNAc-Mal) to glucosamine malate (GlcN-Mal). Has weak activity compared with bshB1. The polypeptide is Probable N-acetyl-alpha-D-glucosaminyl L-malate deacetylase 2 (Bacillus cereus (strain ATCC 14579 / DSM 31 / CCUG 7414 / JCM 2152 / NBRC 15305 / NCIMB 9373 / NCTC 2599 / NRRL B-3711)).